We begin with the raw amino-acid sequence, 371 residues long: DNA replication and repair protein RecF (371 aa).

30–37 (GENAQGKT) serves as a coordination point for ATP.

The protein belongs to the RecF family.

The protein resides in the cytoplasm. In terms of biological role, the RecF protein is involved in DNA metabolism; it is required for DNA replication and normal SOS inducibility. RecF binds preferentially to single-stranded, linear DNA. It also seems to bind ATP. The polypeptide is DNA replication and repair protein RecF (Lysinibacillus sphaericus (strain C3-41)).